A 22-amino-acid polypeptide reads, in one-letter code: thr operon leader peptide (22 aa).

The protein belongs to the thr operon leader peptide family.

In terms of biological role, this protein is involved in control of the biosynthesis of threonine. This is thr operon leader peptide from Klebsiella pneumoniae (strain 342).